The primary structure comprises 264 residues: DNA repair protein RecO (264 aa).

Belongs to the RecO family.

Its function is as follows. Involved in DNA repair and RecF pathway recombination. In Prosthecochloris aestuarii (strain DSM 271 / SK 413), this protein is DNA repair protein RecO.